Consider the following 523-residue polypeptide: Sialate O-acetylesterase (523 aa).

The signal sequence occupies residues 1–23 (MVAPGLVLGLVLPLILWADRSAG). Residues asparagine 107, asparagine 138, asparagine 267, asparagine 290, asparagine 401, and asparagine 422 are each glycosylated (N-linked (GlcNAc...) asparagine).

In terms of tissue distribution, widely expressed with high expression in the testis, prostate, and colon.

It is found in the lysosome. The protein resides in the cytoplasm. The catalysed reaction is N-acetyl-9-O-acetylneuraminate + H2O = N-acetylneuraminate + acetate + H(+). It catalyses the reaction an Ac-O-9-sialoglycoconjugate + H2O = a sialoglycoconjugate + acetate + H(+). In terms of biological role, catalyzes the removal of O-acetyl ester groups from position 9 of the free diacetylated sialate N-acetyl-9-O-acetylneuraminate (Neu5,9Ac2) in the cytosol and of the diacetylated sialate residues of sialylglycoconjugates in the lysosomes. Together with the sialate-O-acetyltransferase they regulate the balance of acetylated sialoglycoconjugates, key players in various processes such as cell-cell interactions, host-pathogen recognition, and tumor antigenicity. The polypeptide is Sialate O-acetylesterase (SIAE) (Homo sapiens (Human)).